The following is a 154-amino-acid chain: Protein FAM162A (154 aa).

The required for proapoptotic activity stretch occupies residues 76-102 (RFKKEDEIPETVSLEMLDTAKNKMRVK). A helical transmembrane segment spans residues 103-120 (ISYLMIALTVVGCICMVI).

Belongs to the UPF0389 family. As to quaternary structure, interacts with HSP90AB1; HSP90AB1 is essential for FAM162A mitochondrial localization and pro-apoptotic activity. Interacts with VDAC2; the interaction is probably involved in inducing mitochondrial permeability transition.

It is found in the mitochondrion membrane. In terms of biological role, proposed to be involved in regulation of apoptosis; the exact mechanism may differ between cell types/tissues. May be involved in hypoxia-induced cell death of transformed cells implicating cytochrome C release and caspase activation (such as CASP9) and inducing mitochondrial permeability transition. May be involved in hypoxia-induced cell death of neuronal cells probably by promoting release of AIFM1 from mitochondria to cytoplasm and its translocation to the nucleus; however, the involvement of caspases has been reported conflictingly. This Pongo abelii (Sumatran orangutan) protein is Protein FAM162A (FAM162A).